The chain runs to 366 residues: MPTETLQTGSMVKPVSPAGTFTSAVPLRILNKGPDYFRRQAEPNPKRLSAVERLEADKAKYVKSQEVINAKQEPVKPAVLAKPPVCPGTKRALGSPTLKVFGNHAKTESGVQRETLKLEILKNIINSSEGSSSGSGHKHSSRNWPPHRDTTDLHRHSFAESLKVYPTPGHGSPQESSSHVSRRLLEQSAETFLHVSHSSSDIRKVTSVKPLKAIPCSSSAPPLPPKPKVAAMKSPEADQVEPACGVSRRPSLQRSKSDLSDRYFRVDADVERFFNYCGLDPEELENLGMENFARANSDIISLNFRSASMISSDCEQSQDSNSDLRNDDSANDRVPYGISAIERNARIIKWLYSIKQARESQKVSHV.

3 disordered regions span residues 127–152, 163–182, and 216–252; these read SSEGSSSGSGHKHSSRNWPPHRDTTD, KVYPTPGHGSPQESSSHVSR, and CSSSAPPLPPKPKVAAMKSPEADQVEPACGVSRRPSL. Ser-234 and Ser-297 each carry phosphoserine. The disordered stretch occupies residues 313-333; it reads DCEQSQDSNSDLRNDDSANDR. Over residues 322–331 the composition is skewed to basic and acidic residues; that stretch reads SDLRNDDSAN.

Belongs to the FAM110 family.

It localises to the cytoplasm. The protein resides in the cytoskeleton. The protein localises to the microtubule organizing center. It is found in the centrosome. This Mus musculus (Mouse) protein is Protein FAM110B (Fam110b).